A 173-amino-acid polypeptide reads, in one-letter code: Ribosome maturation factor RimM (173 aa).

Residues 78 to 157 (EEEFYLADLI…VLVVPPEEVE (80 aa)) form the PRC barrel domain. The tract at residues 152 to 173 (PPEEVEAQEPPEKDAGGDEPSP) is disordered.

Belongs to the RimM family. Binds ribosomal protein uS19.

The protein localises to the cytoplasm. In terms of biological role, an accessory protein needed during the final step in the assembly of 30S ribosomal subunit, possibly for assembly of the head region. Essential for efficient processing of 16S rRNA. May be needed both before and after RbfA during the maturation of 16S rRNA. It has affinity for free ribosomal 30S subunits but not for 70S ribosomes. This chain is Ribosome maturation factor RimM, found in Beijerinckia indica subsp. indica (strain ATCC 9039 / DSM 1715 / NCIMB 8712).